The following is an 862-amino-acid chain: Mismatch repair endonuclease PMS2 (862 aa).

ATP is bound by residues Asn-45, Asp-70, Glu-109, Ala-110, and Leu-111. Composition is skewed to basic and acidic residues over residues 391 to 401, 408 to 444, 484 to 495, and 528 to 552; these read DLEKPMVEKQD, TGEEKKDVSISRLREAFSLRHTTENKPHSPKTPEPRR, PTDRAEVEKDSG, and GSQEHVDSQEKAPKTDDSFSDVDCH. The disordered stretch occupies residues 391–552; that stretch reads DLEKPMVEKQ…DDSFSDVDCH (162 aa). Residue Thr-573 is modified to Phosphothreonine. Positions 577-580 match the Nuclear localization signal motif; that stretch reads KRFK. Thr-597 carries the post-translational modification Phosphothreonine.

Belongs to the DNA mismatch repair MutL/HexB family. Heterodimer of PMS2 and MLH1 (MutL alpha); this interaction is required for the stability of both partners. Forms a ternary complex with MutS alpha (MSH2-MSH6) or MutS beta (MSH2-MSH3). Part of the BRCA1-associated genome surveillance complex (BASC), which contains BRCA1, MSH2, MSH6, MLH1, ATM, BLM, PMS2 and the RAD50-MRE11-NBS1 protein complex. This association could be a dynamic process changing throughout the cell cycle and within subnuclear domains. Interacts with MTMR15/FAN1.

It localises to the nucleus. The enzyme catalyses ATP + H2O = ADP + phosphate + H(+). Functionally, component of the post-replicative DNA mismatch repair system (MMR). Heterodimerizes with MLH1 to form MutL alpha. DNA repair is initiated by MutS alpha (MSH2-MSH6) or MutS beta (MSH2-MSH3) binding to a dsDNA mismatch, then MutL alpha is recruited to the heteroduplex. Assembly of the MutL-MutS-heteroduplex ternary complex in presence of RFC and PCNA is sufficient to activate endonuclease activity of PMS2. It introduces single-strand breaks near the mismatch and thus generates new entry points for the exonuclease EXO1 to degrade the strand containing the mismatch. DNA methylation would prevent cleavage and therefore assure that only the newly mutated DNA strand is going to be corrected. MutL alpha (MLH1-PMS2) interacts physically with the clamp loader subunits of DNA polymerase III, suggesting that it may play a role to recruit the DNA polymerase III to the site of the MMR. Also implicated in DNA damage signaling, a process which induces cell cycle arrest and can lead to apoptosis in case of major DNA damages. Possesses an ATPase activity, but in the absence of gross structural changes, ATP hydrolysis may not be necessary for proficient mismatch repair. This Homo sapiens (Human) protein is Mismatch repair endonuclease PMS2.